The chain runs to 597 residues: Aspartate--tRNA ligase (597 aa).

L-aspartate is bound at residue Glu-171. Residues 195-198 form an aspartate region; sequence QLFK. Position 217 (Arg-217) interacts with L-aspartate. Residues 217–219 and Gln-226 each bind ATP; that span reads RDE. Residue His-448 participates in L-aspartate binding. Glu-482 is an ATP binding site. Arg-489 contacts L-aspartate. ATP is bound at residue 534 to 537; sequence GLDR.

Belongs to the class-II aminoacyl-tRNA synthetase family. Type 1 subfamily. In terms of assembly, homodimer.

It localises to the cytoplasm. The catalysed reaction is tRNA(Asp) + L-aspartate + ATP = L-aspartyl-tRNA(Asp) + AMP + diphosphate. Functionally, catalyzes the attachment of L-aspartate to tRNA(Asp) in a two-step reaction: L-aspartate is first activated by ATP to form Asp-AMP and then transferred to the acceptor end of tRNA(Asp). This chain is Aspartate--tRNA ligase, found in Photobacterium profundum (strain SS9).